The chain runs to 295 residues: Putative 23S rRNA (guanine-N(1)-)-methyltransferase (295 aa).

Cys11, Cys14, Cys31, and His35 together coordinate Zn(2+). S-adenosyl-L-methionine-binding positions include Tyr74, 116–117, and His204; that span reads TG.

Belongs to the methyltransferase superfamily. RlmA family.

Functionally, confers strong resistance to mycinamicin (MM) and tylosin (TY). May function as methyltransferase. This Micromonospora griseorubida protein is Putative 23S rRNA (guanine-N(1)-)-methyltransferase (myrA).